A 260-amino-acid chain; its full sequence is Thiazole synthase (260 aa).

Catalysis depends on Lys96, which acts as the Schiff-base intermediate with DXP. Residues Gly157, 183-184 (AG), and 205-206 (AS) contribute to the 1-deoxy-D-xylulose 5-phosphate site.

The protein belongs to the ThiG family. Homotetramer. Forms heterodimers with either ThiH or ThiS.

The protein resides in the cytoplasm. It catalyses the reaction [ThiS sulfur-carrier protein]-C-terminal-Gly-aminoethanethioate + 2-iminoacetate + 1-deoxy-D-xylulose 5-phosphate = [ThiS sulfur-carrier protein]-C-terminal Gly-Gly + 2-[(2R,5Z)-2-carboxy-4-methylthiazol-5(2H)-ylidene]ethyl phosphate + 2 H2O + H(+). It participates in cofactor biosynthesis; thiamine diphosphate biosynthesis. Catalyzes the rearrangement of 1-deoxy-D-xylulose 5-phosphate (DXP) to produce the thiazole phosphate moiety of thiamine. Sulfur is provided by the thiocarboxylate moiety of the carrier protein ThiS. In vitro, sulfur can be provided by H(2)S. This is Thiazole synthase from Corynebacterium glutamicum (strain ATCC 13032 / DSM 20300 / JCM 1318 / BCRC 11384 / CCUG 27702 / LMG 3730 / NBRC 12168 / NCIMB 10025 / NRRL B-2784 / 534).